We begin with the raw amino-acid sequence, 106 residues long: Urease subunit beta (106 aa).

The protein belongs to the urease beta subunit family. In terms of assembly, heterotrimer of UreA (gamma), UreB (beta) and UreC (alpha) subunits. Three heterotrimers associate to form the active enzyme.

The protein resides in the cytoplasm. The enzyme catalyses urea + 2 H2O + H(+) = hydrogencarbonate + 2 NH4(+). The protein operates within nitrogen metabolism; urea degradation; CO(2) and NH(3) from urea (urease route): step 1/1. The sequence is that of Urease subunit beta from Prochlorococcus marinus (strain MIT 9312).